Reading from the N-terminus, the 175-residue chain is Regenerating islet-derived protein 3-beta (175 aa).

A signal peptide spans 1-26; sequence MLHRLAFPVMSWMLLSCLMLLSQVQG. Positions 27–37 are excised as a propeptide; it reads EDSPKKIPSAR. 3 disulfides stabilise this stretch: C40-C51, C68-C171, and C146-C163. The C-type lectin domain maps to 47 to 172; it reads YGSYCYALFQ…CEVKLPYVCK (126 aa). H107 provides a ligand contact to Zn(2+). Positions 114 to 116 match the EPN motif; that stretch reads EPN. E121 is a binding site for Zn(2+).

In terms of assembly, forms a hexameric membrane-permeabilizing oligomeric pore on membrane phospholipids. The hexamer is formed by three dimers related by helical symmetry. Forms filaments, filamentation traps pore complexes and limits damage to host cells. Interacts with EXTL3. In terms of processing, proteolytic processing by trypsin removes an inhibitory N-terminal propeptide and is essential for peptidoglycan binding and antibacterial activity. In terms of tissue distribution, constitutively expressed in intestine.

It is found in the secreted. With respect to regulation, lipopolysaccharide inhibits pore-forming activity, explaining why is bactericidal for Gram-positive but not Gram-negative bacteria. In terms of biological role, bactericidal C-type lectin which acts against several intestinal Gram-positive bacteria and Gram-negative bacteria. Lacks antibacterial activity against S.typhimurium. May play a role in protection against infection with S.enteritidis by inhibiting its translocation from the gut lumen into intestinal tissues and further extraintestinal tissues. Functionally, acts as a hormone in response to different stimuli. Secreted by different cell types to activate its receptor EXTL3 and induce cell specific signaling pathways. In pancreas, is able stimulate cell proliferation. The protein is Regenerating islet-derived protein 3-beta of Rattus norvegicus (Rat).